The primary structure comprises 364 residues: Pectinesterase (364 aa).

The first 22 residues, 1-22, serve as a signal peptide directing secretion; the sequence is MSCIAVEAVLLGILLYIPIVLS. Asn103 carries an N-linked (GlcNAc...) asparagine glycan. The active site involves Asp220.

Its subcellular location is the secreted. It catalyses the reaction [(1-&gt;4)-alpha-D-galacturonosyl methyl ester](n) + n H2O = [(1-&gt;4)-alpha-D-galacturonosyl](n) + n methanol + n H(+). The protein operates within glycan metabolism; pectin degradation; 2-dehydro-3-deoxy-D-gluconate from pectin: step 1/5. In terms of biological role, catalyzes the demethylesterification of homogalacturonan components of pectin. In Parthenium hysterophorus (Santa Maria feverfew), this protein is Pectinesterase.